The chain runs to 800 residues: Serine/threonine-protein kinase KIN4 (800 aa).

A Protein kinase domain is found at 46 to 313; that stretch reads YIIGSTLGEG…LQTIKRHVWL (268 aa). ATP contacts are provided by residues 52-60 and Lys80; that span reads LGEGEFGKV. Asp175 (proton acceptor) is an active-site residue. Disordered stretches follow at residues 331–397 and 438–487; these read LQKE…GSKV and SARH…TSFT. A compositionally biased stretch (low complexity) spans 348 to 358; that stretch reads STYSSSASSYS. A phosphoserine mark is found at Ser365 and Ser388. Polar residues-rich tracts occupy residues 380–395 and 459–473; these read QLATSRPASPTFSTGS and GSPTTARTRNAPSSK. Ser521 bears the Phosphoserine mark. 2 disordered regions span residues 629–661 and 678–754; these read EPTNSTDEDHVESQLENVGHSSNKSDASSDKDS and SLNG…PGRS. A compositionally biased stretch (polar residues) spans 678–721; that stretch reads SLNGSRSTVESRTSKGNAPPVSSRNPSGQSNRSNIKITQQQPRN. A compositionally biased stretch (basic and acidic residues) spans 727-740; sequence PNPDKKINDNRIRD. A Phosphoserine modification is found at Ser748.

The protein belongs to the protein kinase superfamily. Ser/Thr protein kinase family.

The catalysed reaction is L-seryl-[protein] + ATP = O-phospho-L-seryl-[protein] + ADP + H(+). It catalyses the reaction L-threonyl-[protein] + ATP = O-phospho-L-threonyl-[protein] + ADP + H(+). Its function is as follows. This protein is probably a serine/threonine protein kinase. The polypeptide is Serine/threonine-protein kinase KIN4 (KIN4) (Saccharomyces cerevisiae (strain ATCC 204508 / S288c) (Baker's yeast)).